The following is a 72-amino-acid chain: Hirudin variant-2 (72 aa).

An N-terminal signal peptide occupies residues 1–7; it reads AICVSQA. The interval 8–10 is interaction with thrombin active site; sequence ITY. 3 disulfide bridges follow: C13–C21, C23–C35, and C29–C46. Positions 47–72 are disordered; it reads VTGEGTPNPESHNNGDFEEIPEEYLQ. O-linked (GalNAc...) threonine glycosylation occurs at T52. The tract at residues 62–72 is interaction with fibrinogen-binding exosite of thrombin; sequence DFEEIPEEYLQ. A compositionally biased stretch (acidic residues) spans 62 to 72; that stretch reads DFEEIPEEYLQ. A Sulfotyrosine modification is found at Y70.

The protein belongs to the protease inhibitor I14 (hirudin) family.

The protein localises to the secreted. Functionally, hirudin is a potent thrombin-specific protease inhibitor. It forms a stable non-covalent complex with alpha-thrombin, thereby abolishing its ability to cleave fibrinogen. This Hirudo medicinalis (Medicinal leech) protein is Hirudin variant-2.